The sequence spans 209 residues: GTP cyclohydrolase 1 (209 aa).

3 residues coordinate Zn(2+): Cys89, His92, and Cys163.

This sequence belongs to the GTP cyclohydrolase I family. In terms of assembly, toroid-shaped homodecamer, composed of two pentamers of five dimers.

It carries out the reaction GTP + H2O = 7,8-dihydroneopterin 3'-triphosphate + formate + H(+). It functions in the pathway cofactor biosynthesis; 7,8-dihydroneopterin triphosphate biosynthesis; 7,8-dihydroneopterin triphosphate from GTP: step 1/1. The protein is GTP cyclohydrolase 1 of Sulfolobus acidocaldarius (strain ATCC 33909 / DSM 639 / JCM 8929 / NBRC 15157 / NCIMB 11770).